Here is a 141-residue protein sequence, read N- to C-terminus: Large ribosomal subunit protein uL11 (141 aa).

The protein belongs to the universal ribosomal protein uL11 family. In terms of assembly, part of the ribosomal stalk of the 50S ribosomal subunit. Interacts with L10 and the large rRNA to form the base of the stalk. L10 forms an elongated spine to which L12 dimers bind in a sequential fashion forming a multimeric L10(L12)X complex. In terms of processing, one or more lysine residues are methylated.

Functionally, forms part of the ribosomal stalk which helps the ribosome interact with GTP-bound translation factors. The protein is Large ribosomal subunit protein uL11 of Prochlorococcus marinus subsp. pastoris (strain CCMP1986 / NIES-2087 / MED4).